The chain runs to 314 residues: MMTCASSDDNESEKDKDSESFVEVDPTGRYGRYGELLGSGAVKKVYRAFDQEEGIEVAWNQVKLRCFSDDPAMTERLYSEVRLLKNLKNSNIITLYKVWRDERNNTLNFITEICTSGNLREYRKKHRHVSMRALKKWSKQILKGLDYLHTHDPCIIHRDLNCSNIFVNGNIGQVKIGDLGLAAIVGKNHLAHSILGTPEFMAPELYEENYTEMVDIYSYGMCVLELVSLEIPYSECDSVAKIYKRVSKGLKPEALNKVNDPEAKAFIEKCIAQPRARPSAAELLCDPFFDGILDDDDEDGENNDNNGAGRIVVS.

The disordered stretch occupies residues 1–22 (MMTCASSDDNESEKDKDSESFV). Residues 31-289 (GRYGELLGSG…AAELLCDPFF (259 aa)) form the Protein kinase domain. 111–114 (TEIC) contacts ATP. The Proton acceptor role is filled by Asp-178. The interval 295–314 (DDDEDGENNDNNGAGRIVVS) is disordered.

Belongs to the protein kinase superfamily. Ser/Thr protein kinase family. WNK subfamily.

The catalysed reaction is L-seryl-[protein] + ATP = O-phospho-L-seryl-[protein] + ADP + H(+). It catalyses the reaction L-threonyl-[protein] + ATP = O-phospho-L-threonyl-[protein] + ADP + H(+). Its function is as follows. May regulate flowering time by modulating the photoperiod pathway. This is Probable serine/threonine-protein kinase WNK11 (WNK11) from Arabidopsis thaliana (Mouse-ear cress).